Consider the following 1215-residue polypeptide: DNA-directed RNA polymerase subunit beta' (1215 aa).

Zn(2+) is bound by residues cysteine 60, cysteine 62, cysteine 75, and cysteine 78. Positions 450, 452, and 454 each coordinate Mg(2+). Zn(2+) contacts are provided by cysteine 818, cysteine 892, cysteine 899, and cysteine 902.

The protein belongs to the RNA polymerase beta' chain family. The RNAP catalytic core consists of 2 alpha, 1 beta, 1 beta' and 1 omega subunit. When a sigma factor is associated with the core the holoenzyme is formed, which can initiate transcription. Mg(2+) serves as cofactor. The cofactor is Zn(2+).

The enzyme catalyses RNA(n) + a ribonucleoside 5'-triphosphate = RNA(n+1) + diphosphate. Its function is as follows. DNA-dependent RNA polymerase catalyzes the transcription of DNA into RNA using the four ribonucleoside triphosphates as substrates. This is DNA-directed RNA polymerase subunit beta' from Streptococcus suis (strain 98HAH33).